We begin with the raw amino-acid sequence, 370 residues long: 3-isopropylmalate dehydrogenase (370 aa).

77–90 serves as a coordination point for NAD(+); it reads GPKWDSVPYEVRPE. 4 residues coordinate substrate: arginine 97, arginine 107, arginine 135, and aspartate 226. Residues aspartate 226, aspartate 250, and aspartate 254 each contribute to the Mg(2+) site. 290-302 is a binding site for NAD(+); sequence GSAPDIAGKGIAN.

This sequence belongs to the isocitrate and isopropylmalate dehydrogenases family. LeuB type 1 subfamily. Homodimer. It depends on Mg(2+) as a cofactor. The cofactor is Mn(2+).

The protein resides in the cytoplasm. It catalyses the reaction (2R,3S)-3-isopropylmalate + NAD(+) = 4-methyl-2-oxopentanoate + CO2 + NADH. Its pathway is amino-acid biosynthesis; L-leucine biosynthesis; L-leucine from 3-methyl-2-oxobutanoate: step 3/4. Its function is as follows. Catalyzes the oxidation of 3-carboxy-2-hydroxy-4-methylpentanoate (3-isopropylmalate) to 3-carboxy-4-methyl-2-oxopentanoate. The product decarboxylates to 4-methyl-2 oxopentanoate. This chain is 3-isopropylmalate dehydrogenase, found in Brucella abortus (strain 2308).